The sequence spans 169 residues: uncharacterized protein (169 aa).

Helical transmembrane passes span 10–30 (NVHM…FKLI) and 149–169 (IPLA…LLIP).

The protein resides in the membrane. This is an uncharacterized protein from Dictyostelium discoideum (Social amoeba).